A 239-amino-acid chain; its full sequence is 2,3,4,5-tetrahydropyridine-2,6-dicarboxylate N-acetyltransferase (239 aa).

It belongs to the transferase hexapeptide repeat family. DapH subfamily.

It catalyses the reaction (S)-2,3,4,5-tetrahydrodipicolinate + acetyl-CoA + H2O = L-2-acetamido-6-oxoheptanedioate + CoA. Its pathway is amino-acid biosynthesis; L-lysine biosynthesis via DAP pathway; LL-2,6-diaminopimelate from (S)-tetrahydrodipicolinate (acetylase route): step 1/3. Catalyzes the transfer of an acetyl group from acetyl-CoA to tetrahydrodipicolinate. In Staphylococcus aureus (strain bovine RF122 / ET3-1), this protein is 2,3,4,5-tetrahydropyridine-2,6-dicarboxylate N-acetyltransferase.